Here is a 536-residue protein sequence, read N- to C-terminus: Dual specificity calcium/calmodulin-dependent 3',5'-cyclic nucleotide phosphodiesterase 1B (536 aa).

The disordered stretch occupies residues 1–20; the sequence is MELSPRSPPEMLEESDCPSP. 2 positions are modified to phosphoserine: Ser-7 and Ser-15. 2 calmodulin-binding regions span residues 27–47 and 118–141; these read PSKK…KQLE and EKPK…MFRR. Residues 146-503 enclose the PDEase domain; sequence VGPTYSTAVL…QKWKERAASG (358 aa). The Proton donor role is filled by His-223. Zn(2+) contacts are provided by His-227, His-263, Asp-264, and Asp-370. Asp-264 is a binding site for Mg(2+). Disordered regions lie at residues 447 to 474 and 494 to 536; these read LADE…VGDP and QKWK…GNLD. Residues 455 to 464 are compositionally biased toward polar residues; sequence KNQPSFQWRQ. Phosphoserine is present on residues Ser-466 and Ser-514.

This sequence belongs to the cyclic nucleotide phosphodiesterase family. PDE1 subfamily. In terms of assembly, homodimer. Zn(2+) serves as cofactor. Requires Mg(2+) as cofactor.

It localises to the cytoplasm. The protein resides in the cytosol. The enzyme catalyses a nucleoside 3',5'-cyclic phosphate + H2O = a nucleoside 5'-phosphate + H(+). It catalyses the reaction 3',5'-cyclic GMP + H2O = GMP + H(+). The catalysed reaction is 3',5'-cyclic AMP + H2O = AMP + H(+). With respect to regulation, type I PDE are activated by the binding of calmodulin in the presence of Ca(2+). Its function is as follows. Cyclic nucleotide phosphodiesterase with a dual specificity for the second messengers cAMP and cGMP, which are key regulators of many important physiological processes. Has a preference for cGMP as a substrate. This Homo sapiens (Human) protein is Dual specificity calcium/calmodulin-dependent 3',5'-cyclic nucleotide phosphodiesterase 1B.